Consider the following 891-residue polypeptide: MLTGRESLLRLIGKRRRFLPNRHLLLSAHTPNSLNLEFNDYGNLVSLAGDDCRLSEDPTSSDDPSKFSDDLSLSTRKKRRLTQTTLLQSSFLSVPKQLEDGLVICTQQKSILDSETFEFSLVQRSEPSESICCKVEDGSCSPSREESLKTVTLDEDNGEAIETFIVGRKFSDVQDLEIGGDIFLLRHPENVKDRNAIKVISGDSEMLGYLPKDISQCLSPLIDDYDLKFEGTITSVPKKSSEAVLIKVVCHKMRSDGWKECELYGDFKPLWEKVLQVVEHQMQFPPKTTRYQLNFNVLLQEVLRSCSHLFTADEKAFLESFPTLSEDSQRLFIRLYTRKGPWFRLSNISYPEVTDSLQALKDLTVRGFMSSVKDANELDNQKMKEITELLNVTELRDILSMNKVFSRTSRKRDLINSLCSCYNDGTRINLATVILERTGLCAKVSSTAESLIWRVERLFFLNGEQDLSSFVLLDLGIIKYPTYKCIDSEQIFSNRTKLLAYEEAIEVAQLMDESLDNEDPQTVLKCIIIAETRISSSSLDSAHAAAFNRFTAPWVNSKVVLLGVSFFENQKRYNRAVYLLRRLLSCFNCDGRRGYWTVRLSTDLEHMGRPNESLTVAEQGLLDPWVRAGSRVALQRRILRLAKPPRRWKTPTFSNLVDNKIPEVTIQGRSLNCEVGIKNRFYGEDGEQCGVEQLALQYYSGEGGGWQGIHTESSIWLTIFGLLMWDILFSDVPGVFQTRFQTAPLDLETESFYLTRKETIESQLEKVANGMAEEILIISYETQRGTACRGVAWERFSLEELRAAVACVGGMCIASLCRHLAQDYRSWCSGMPDLLVWRFKENGYEGEAKLVEVKSEKDRLSEQQRAWLLLLMDSGFNVEICKVRPASLIKT.

Mn(2+)-binding residues include glutamate 712, aspartate 833, glutamate 852, and valine 853. The VRR-NUC domain occupies 770–884; the sequence is GMAEEILIIS…GFNVEICKVR (115 aa).

This sequence belongs to the FAN1 family. Requires Mn(2+) as cofactor. It depends on Mg(2+) as a cofactor.

It localises to the nucleus. The catalysed reaction is Hydrolytically removes 5'-nucleotides successively from the 3'-hydroxy termini of 3'-hydroxy-terminated oligonucleotides.. Nuclease required for the repair of DNA interstrand cross-links (ICLs). Acts as a 5'-3' exonuclease that anchors at a cut end of DNA and cleaves DNA successively at every third nucleotide, allowing to excise an ICL from one strand through flanking incisions. May act upstream of the helicase RECQL4A and the ATPase RAD5A, which is involved in error-free post-replicative repair. Functions independently of MUS81 pathway, but in a similar pathway with RECQ4A, RAD5A and MFH1 in ICL repair. This Arabidopsis thaliana (Mouse-ear cress) protein is Fanconi-associated nuclease 1 homolog.